A 573-amino-acid chain; its full sequence is Methionine--tRNA ligase (573 aa).

Positions 11–21 match the 'HIGH' region motif; it reads PYINGIKHLGN. Residues Cys143, Cys146, Cys156, and Cys159 each coordinate Zn(2+). The 'KMSKS' region motif lies at 346–350; it reads QFSTS. An ATP-binding site is contributed by Thr349.

The protein belongs to the class-I aminoacyl-tRNA synthetase family. MetG type 1 subfamily. As to quaternary structure, monomer. It depends on Zn(2+) as a cofactor.

The protein resides in the cytoplasm. It carries out the reaction tRNA(Met) + L-methionine + ATP = L-methionyl-tRNA(Met) + AMP + diphosphate. Is required not only for elongation of protein synthesis but also for the initiation of all mRNA translation through initiator tRNA(fMet) aminoacylation. The sequence is that of Methionine--tRNA ligase from Ruegeria sp. (strain TM1040) (Silicibacter sp.).